A 73-amino-acid chain; its full sequence is Translation initiation factor IF-1 (73 aa).

The S1-like domain occupies 1-73; it reads MPKKDGAIEI…TRGRIVYRYK (73 aa).

It belongs to the IF-1 family. Component of the 30S ribosomal translation pre-initiation complex which assembles on the 30S ribosome in the order IF-2 and IF-3, IF-1 and N-formylmethionyl-tRNA(fMet); mRNA recruitment can occur at any time during PIC assembly.

It localises to the cytoplasm. One of the essential components for the initiation of protein synthesis. Stabilizes the binding of IF-2 and IF-3 on the 30S subunit to which N-formylmethionyl-tRNA(fMet) subsequently binds. Helps modulate mRNA selection, yielding the 30S pre-initiation complex (PIC). Upon addition of the 50S ribosomal subunit IF-1, IF-2 and IF-3 are released leaving the mature 70S translation initiation complex. This Salinispora arenicola (strain CNS-205) protein is Translation initiation factor IF-1.